Here is a 397-residue protein sequence, read N- to C-terminus: MATTTAGLTDLKFRVVREDFADAVAWVARSLPTRPTIPVLAGVLLTGTDEGLTISGFDYEVSAEVKVSAEIASAGSVLVSGRLLSDITKALPAKPVEVSVEGTRVSLTCGSARFSLPTLAVEDYPALPALPEETGVIASDLFAEAIGQVAVAAGRDDTLPMLTGIRVEISGESVVLAATDRFRLAVRELTWVTTAGDVEAAVLVPAKTLAEAAKAGTDGNQVHLALGSGASVGKDGLLGIRSEGKRSTTRLLDAEFPKFRQLLPAEHTAVATIGVAELTEAIKRVALVADRGAQIRMEFSDDTLKLSAGADDVGRAEEDLPVDFAGEPLTIAFNPTYLTDGLGSLHSERVTFGFTTPSRPAVLRPAGEDDGANGGSGPFPAAKTDYVYLLMPVRLPG.

The protein belongs to the beta sliding clamp family. As to quaternary structure, forms a ring-shaped head-to-tail homodimer around DNA which binds and tethers DNA polymerases and other proteins to the DNA. The DNA replisome complex has a single clamp-loading complex (3 tau and 1 each of delta, delta', psi and chi subunits) which binds 3 Pol III cores (1 core on the leading strand and 2 on the lagging strand) each with a beta sliding clamp dimer. Additional proteins in the replisome are other copies of gamma, psi and chi, Ssb, DNA helicase and RNA primase.

The protein localises to the cytoplasm. Confers DNA tethering and processivity to DNA polymerases and other proteins. Acts as a clamp, forming a ring around DNA (a reaction catalyzed by the clamp-loading complex) which diffuses in an ATP-independent manner freely and bidirectionally along dsDNA. Initially characterized for its ability to contact the catalytic subunit of DNA polymerase III (Pol III), a complex, multichain enzyme responsible for most of the replicative synthesis in bacteria; Pol III exhibits 3'-5' exonuclease proofreading activity. The beta chain is required for initiation of replication as well as for processivity of DNA replication. The polypeptide is Beta sliding clamp (dnaN) (Mycolicibacterium smegmatis (strain ATCC 700084 / mc(2)155) (Mycobacterium smegmatis)).